Consider the following 625-residue polypeptide: tRNA uridine 5-carboxymethylaminomethyl modification enzyme MnmG (625 aa).

FAD-binding positions include 16 to 21, Ile-128, and Ser-183; that span reads GGGHAG. 275–289 lines the NAD(+) pocket; the sequence is GPRYCPSIEDKVVRF. Gln-372 lines the FAD pocket.

The protein belongs to the MnmG family. As to quaternary structure, homodimer. Heterotetramer of two MnmE and two MnmG subunits. FAD serves as cofactor.

The protein resides in the cytoplasm. In terms of biological role, NAD-binding protein involved in the addition of a carboxymethylaminomethyl (cmnm) group at the wobble position (U34) of certain tRNAs, forming tRNA-cmnm(5)s(2)U34. This is tRNA uridine 5-carboxymethylaminomethyl modification enzyme MnmG from Protochlamydia amoebophila (strain UWE25).